Consider the following 66-residue polypeptide: Vesicular acetylcholine transporter (66 aa).

Residues 1–15 (GMGLANLLYAPVLLL) form a helical membrane-spanning segment. Topologically, residues 16 to 66 (LRNVGLLTRSRSERDVLLDEPPQGLYDAVRLRERPVSGQDGEPRSPPGPFD) are cytoplasmic. Positions 43–66 (AVRLRERPVSGQDGEPRSPPGPFD) are disordered.

Belongs to the major facilitator superfamily. Vesicular transporter family. As to quaternary structure, interacts with SEC14L1.

The protein localises to the cytoplasmic vesicle. It is found in the secretory vesicle. The protein resides in the synaptic vesicle membrane. The enzyme catalyses acetylcholine(out) + 2 H(+)(in) = acetylcholine(in) + 2 H(+)(out). It catalyses the reaction choline(in) + 2 H(+)(out) = choline(out) + 2 H(+)(in). It carries out the reaction serotonin(in) + 2 H(+)(out) = serotonin(out) + 2 H(+)(in). Electrogenic antiporter that exchanges one cholinergic neurotransmitter, acetylcholine or choline, with two intravesicular protons across the membrane of synaptic vesicles. Uses the electrochemical proton gradient established by the V-type proton-pump ATPase to store neurotransmitters inside the vesicles prior to their release via exocytosis. Determines cholinergic vesicular quantal size at presynaptic nerve terminals in developing neuro-muscular junctions with an impact on motor neuron differentiation and innervation pattern. Part of forebrain cholinergic system, regulates hippocampal synapse transmissions that underlie spatial memory formation. Can transport serotonin. This is Vesicular acetylcholine transporter (SLC18A3) from Macaca fuscata fuscata (Japanese macaque).